The chain runs to 1160 residues: Large proline-rich protein BAG6 (1160 aa).

Residues 7 to 82 enclose the Ubiquitin-like domain; sequence IEVTVKTLDS…HLVERPPPQS (76 aa). 8 disordered regions span residues 76-114, 206-261, 367-422, 478-547, 563-628, 672-711, 962-1038, and 1126-1160; these read ERPPPQSSQPGGGGGGVSGSSGAADGGSSSSQSSAYTTS, EGQS…HPSP, IPMN…GQGT, ASAG…QTNQ, GDQT…DNLA, SGQPVFPSPNQQPPPSQATPPSAPSGPAPTTAPSGGAETL, SARR…AEPW, and YAQQVKSDIKKRLSDDPDYNHQRFPNTHRVFSEDA. Over residues 85 to 94 the composition is skewed to gly residues; it reads PGGGGGGVSG. Composition is skewed to low complexity over residues 95–110 and 223–233; these read SSGAADGGSSSSQSSA and SSSSFSAHPMD. Polar residues-rich tracts occupy residues 247–257 and 371–417; these read QTEGETQSGPN and LGST…QQTG. 2 stretches are compositionally biased toward low complexity: residues 478-495 and 566-614; these read ASAGHQGQQQGTAGAGAQ and TSTT…STAS. Pro residues predominate over residues 677–698; that stretch reads FPSPNQQPPPSQATPPSAPSGP. Residues 699–708 are compositionally biased toward low complexity; it reads APTTAPSGGA. The segment covering 1132–1146 has biased composition (basic and acidic residues); it reads SDIKKRLSDDPDYNH.

In terms of assembly, component of the bag6/bat3 complex.

The protein resides in the cytoplasm. Its subcellular location is the cytosol. The protein localises to the nucleus. It is found in the secreted. It localises to the extracellular exosome. Its function is as follows. ATP-independent molecular chaperone preventing the aggregation of misfolded and hydrophobic patches-containing proteins. Functions as part of a cytosolic protein quality control complex, the bag6/bat3 complex, which maintains these client proteins in a soluble state and participates in their proper delivery to the endoplasmic reticulum or alternatively can promote their sorting to the proteasome where they undergo degradation. The bag6/bat3 complex is involved in the post-translational delivery of tail-anchored/type II transmembrane proteins to the endoplasmic reticulum membrane. Similarly, the bag6/bat3 complex also functions as a sorting platform for proteins of the secretory pathway that are mislocalized to the cytosol either delivering them to the proteasome for degradation or to the endoplasmic reticulum. The bag6/bat3 complex also plays a role in the endoplasmic reticulum-associated degradation (ERAD), a quality control mechanism that eliminates unwanted proteins of the endoplasmic reticulum through their retrotranslocation to the cytosol and their targeting to the proteasome. It maintains these retrotranslocated proteins in an unfolded yet soluble state condition in the cytosol to ensure their proper delivery to the proteasome. Also required for selective ubiquitin-mediated degradation of defective nascent chain polypeptides by the proteasome. Also involved in endoplasmic reticulum stress-induced pre-emptive quality control, a mechanism that selectively attenuates the translocation of newly synthesized proteins into the endoplasmic reticulum and reroutes them to the cytosol for proteasomal degradation. May ensure the proper degradation of these proteins and thereby protects the endoplasmic reticulum from protein overload upon stress. By stabilizing a large spectrum of proteins, may indirectly affect different biological processes including apoptosis. By controlling the steady-state expression of the IGF1R receptor, indirectly regulates the insulin-like growth factor receptor signaling pathway. Functionally, when nuclear, may also act as a component of some chromatin regulator complex. The chain is Large proline-rich protein BAG6 from Danio rerio (Zebrafish).